A 510-amino-acid chain; its full sequence is Arginine biosynthesis bifunctional protein ArgJ, mitochondrial (510 aa).

Positions 57–70 are enriched in polar residues; that stretch reads TSTNEPSAATTNVP. Residues 57 to 76 form a disordered region; that stretch reads TSTNEPSAATTNVPHPQEAP. Substrate-binding residues include Thr222, Lys248, Thr267, and Glu364. The active-site Nucleophile is Thr267.

This sequence belongs to the ArgJ family. In terms of assembly, heterodimer of an alpha and a beta chain. The alpha and beta chains are autoproteolytically processed from a single precursor protein within the mitochondrion.

The protein resides in the mitochondrion matrix. It carries out the reaction N(2)-acetyl-L-ornithine + L-glutamate = N-acetyl-L-glutamate + L-ornithine. The catalysed reaction is L-glutamate + acetyl-CoA = N-acetyl-L-glutamate + CoA + H(+). It functions in the pathway amino-acid biosynthesis; L-arginine biosynthesis; L-ornithine and N-acetyl-L-glutamate from L-glutamate and N(2)-acetyl-L-ornithine (cyclic): step 1/1. The protein operates within amino-acid biosynthesis; L-arginine biosynthesis; N(2)-acetyl-L-ornithine from L-glutamate: step 1/4. Functionally, catalyzes two activities which are involved in the cyclic version of arginine biosynthesis: the synthesis of acetylglutamate from glutamate and acetyl-CoA, and of ornithine by transacetylation between acetylornithine and glutamate. The sequence is that of Arginine biosynthesis bifunctional protein ArgJ, mitochondrial from Malassezia globosa (strain ATCC MYA-4612 / CBS 7966) (Dandruff-associated fungus).